A 351-amino-acid chain; its full sequence is Snurportin-1 (351 aa).

2 disordered regions span residues 1-66 and 294-322; these read MESS…QKGI and EQKK…EYDS. Positions 8-42 are enriched in basic and acidic residues; the sequence is LYKKGLDIGEQQKQRQKELLKQQKLRRQQEQDDYR. Residues 52-62 are compositionally biased toward basic residues; sequence PRKKSGKRSGH. Residues 274-330 are a coiled coil; sequence VLQYMDAFEQKLAEHRRTLKEQKKKVNEQKEDPHTMEAEEDVESDEYDSLKRVLDQQ. Over residues 294–310 the composition is skewed to basic and acidic residues; the sequence is EQKKKVNEQKEDPHTME. The segment covering 311 to 320 has biased composition (acidic residues); sequence AEEDVESDEY.

It belongs to the snurportin family. As to quaternary structure, interacts with components of the snRNP complex including SmB and Smn; these interactions are RNA-dependent. Interacts with importin-7 msk but not with importin subunit beta Fs(2)Ket; the interaction is RNA-dependent.

It is found in the nucleus. It localises to the cytoplasm. Its subcellular location is the U-body. The protein resides in the nucleus speckle. The protein localises to the cajal body. Functions as an U snRNP-specific nuclear import adapter. Involved in the trimethylguanosine (m3G)-cap-dependent nuclear import of U snRNPs. Binds specifically to the terminal m3G-cap U snRNAs. The chain is Snurportin-1 from Drosophila melanogaster (Fruit fly).